A 422-amino-acid polypeptide reads, in one-letter code: Zinc finger protein 550 (422 aa).

Positions 12-83 (VTFKDVAVTF…KRGLSHATCA (72 aa)) constitute a KRAB domain. The interval 113–158 (LESSTSSDSRLGRARDEEGLLEMQKGKVTPETDLHKETHLGKVSLE) is disordered. The segment covering 122-152 (RLGRARDEEGLLEMQKGKVTPETDLHKETHL) has biased composition (basic and acidic residues). 8 C2H2-type zinc fingers span residues 203-225 (YKCK…QRVH), 231-253 (YECN…YLIH), 259-281 (YKCL…HPIH), 287-309 (YECS…NRTH), 315-337 (FECK…YIIH), 343-365 (YDCM…QRIH), 371-393 (YECT…SVIH), and 399-421 (YKCI…QRVH).

This sequence belongs to the krueppel C2H2-type zinc-finger protein family.

It is found in the nucleus. Functionally, may be involved in transcriptional regulation. The sequence is that of Zinc finger protein 550 (ZNF550) from Homo sapiens (Human).